The chain runs to 259 residues: E3 ubiquitin-protein ligase RNF170 (259 aa).

Residues 1 to 25 are Lumenal-facing; it reads MAKYQGEVQSLKLDDDSVIEGVSDQ. The helical transmembrane segment at 26–46 threads the bilayer; that stretch reads VLVAVVVSLALIATLVYALFS. Topologically, residues 47–202 are cytoplasmic; the sequence is RNAHQNIHPE…GGLFWMFRIR (156 aa). The segment at 88-131 adopts an RING-type zinc-finger fold; the sequence is CPICLHQASLPVETNCGHLFCGTCIVAYWRYGSWLGAISCPICR. Residues 203-223 form a helical membrane-spanning segment; that stretch reads IILCLMGAFFYLISPLDFVPE. Position 224 (A224) is a topological domain, lumenal. A helical transmembrane segment spans residues 225–245; that stretch reads LFGILGFLDDFFVIFLLLIYI. Residues 246–259 are Cytoplasmic-facing; that stretch reads SIMYREVITQRLNR.

As to quaternary structure, constitutively associated with the ERLIN1/ERLIN 2 complex. Interacts with activated ITPR1.

The protein resides in the endoplasmic reticulum membrane. It carries out the reaction S-ubiquitinyl-[E2 ubiquitin-conjugating enzyme]-L-cysteine + [acceptor protein]-L-lysine = [E2 ubiquitin-conjugating enzyme]-L-cysteine + N(6)-ubiquitinyl-[acceptor protein]-L-lysine.. It participates in protein modification; protein ubiquitination. Functionally, E3 ubiquitin-protein ligase. Plays an essential role in stimulus-induced inositol 1,4,5-trisphosphate receptor type 1 (ITPR1) ubiquitination and degradation via the endoplasmic reticulum-associated degradation (ERAD) pathway. Also involved in ITPR1 turnover in resting cells. Selectively inhibits the TLR3-triggered innate immune response by promoting the 'Lys-48'-linked polyubiquitination and degradation of TLR3. In Bos taurus (Bovine), this protein is E3 ubiquitin-protein ligase RNF170 (RNF170).